The following is a 297-amino-acid chain: Nucleotide-binding protein Bsph_0448 (297 aa).

An ATP-binding site is contributed by 19-26 (GMSGAGKT). Residue 70 to 73 (DMRG) participates in GTP binding.

Belongs to the RapZ-like family.

In terms of biological role, displays ATPase and GTPase activities. The sequence is that of Nucleotide-binding protein Bsph_0448 from Lysinibacillus sphaericus (strain C3-41).